The following is a 435-amino-acid chain: 3-phosphoshikimate 1-carboxyvinyltransferase (435 aa).

3 residues coordinate 3-phosphoshikimate: Lys-25, Ser-26, and Arg-30. Lys-25 provides a ligand contact to phosphoenolpyruvate. Gly-99 and Arg-130 together coordinate phosphoenolpyruvate. Positions 176, 177, 178, 204, 319, 342, and 346 each coordinate 3-phosphoshikimate. Gln-178 is a phosphoenolpyruvate binding site. Asp-319 serves as the catalytic Proton acceptor. The phosphoenolpyruvate site is built by Arg-350, Arg-394, and Lys-419.

The protein belongs to the EPSP synthase family. As to quaternary structure, monomer.

The protein resides in the cytoplasm. It catalyses the reaction 3-phosphoshikimate + phosphoenolpyruvate = 5-O-(1-carboxyvinyl)-3-phosphoshikimate + phosphate. It participates in metabolic intermediate biosynthesis; chorismate biosynthesis; chorismate from D-erythrose 4-phosphate and phosphoenolpyruvate: step 6/7. Functionally, catalyzes the transfer of the enolpyruvyl moiety of phosphoenolpyruvate (PEP) to the 5-hydroxyl of shikimate-3-phosphate (S3P) to produce enolpyruvyl shikimate-3-phosphate and inorganic phosphate. The sequence is that of 3-phosphoshikimate 1-carboxyvinyltransferase from Haemophilus ducreyi (strain 35000HP / ATCC 700724).